Here is a 286-residue protein sequence, read N- to C-terminus: Spermidine/putrescine transport system permease protein PotB homolog (286 aa).

6 helical membrane-spanning segments follow: residues 10–30, 62–82, 94–114, 136–156, 193–213, and 248–268; these read AVPF…WIIV, LWTA…FCYF, FVIA…LIGL, FGSG…MFLP, TAIL…VAIA, and GAII…IFAP. One can recognise an ABC transmembrane type-1 domain in the interval 58–264; the sequence is FWTSLWTATV…LITFAFYFVV (207 aa).

Belongs to the binding-protein-dependent transport system permease family. CysTW subfamily.

It is found in the cell membrane. Required for the activity of the bacterial transport system of putrescine and spermidine. The protein is Spermidine/putrescine transport system permease protein PotB homolog (potB) of Mycoplasma pneumoniae (strain ATCC 29342 / M129 / Subtype 1) (Mycoplasmoides pneumoniae).